The chain runs to 380 residues: Cytochrome b (380 aa).

4 helical membrane-spanning segments follow: residues 34-54 (FGSLLGICLMTQILTGLLLAM), 78-99 (WLIRNLHANGASFFFICIYFHI), 114-134 (WNTGVVLLLTLMATAFVGYVL), and 179-199 (FFALHFLLPFMIAGLTLIHLT). Heme b contacts are provided by His-84 and His-98. 2 residues coordinate heme b: His-183 and His-197. His-202 provides a ligand contact to a ubiquinone. The next 4 helical transmembrane spans lie at 227–247 (LKDILGFTLMLLPLTTLALFS), 289–309 (LGGVLALAASVLILFLIPFLH), 321–341 (LSQLLFWVLVANLLILTWVGS), and 348–368 (FIIIGQLASLTYFAILLVLFP).

This sequence belongs to the cytochrome b family. As to quaternary structure, the cytochrome bc1 complex contains 11 subunits: 3 respiratory subunits (MT-CYB, CYC1 and UQCRFS1), 2 core proteins (UQCRC1 and UQCRC2) and 6 low-molecular weight proteins (UQCRH/QCR6, UQCRB/QCR7, UQCRQ/QCR8, UQCR10/QCR9, UQCR11/QCR10 and a cleavage product of UQCRFS1). This cytochrome bc1 complex then forms a dimer. Requires heme b as cofactor.

The protein resides in the mitochondrion inner membrane. Its function is as follows. Component of the ubiquinol-cytochrome c reductase complex (complex III or cytochrome b-c1 complex) that is part of the mitochondrial respiratory chain. The b-c1 complex mediates electron transfer from ubiquinol to cytochrome c. Contributes to the generation of a proton gradient across the mitochondrial membrane that is then used for ATP synthesis. This is Cytochrome b (MT-CYB) from Halobaena caerulea (Blue petrel).